Consider the following 888-residue polypeptide: E3 ubiquitin-protein ligase SH3RF1 (888 aa).

The RING-type zinc-finger motif lies at 12-53 (CPVCLERLDASAKVLPCQHTFCKRCLLGIVGSRNELRCPECR). Residues 108-127 (SSKDLQSSQGGQQPRVQSWS) show a composition bias toward polar residues. Residues 108–128 (SSKDLQSSQGGQQPRVQSWSP) form a disordered region. SH3 domains are found at residues 134 to 193 (PQLP…IIKP) and 196 to 259 (QPPP…FNSA). Residues 275 to 321 (DAGECSSAAAQSSTAPKHSDTKKNTKKRHSFTSLTMANKSSQASQNR) are disordered. Positions 292–362 (HSDTKKNTKK…APSQVHISTT (71 aa)) are interaction with RAC1. Serine 304 carries the post-translational modification Phosphoserine. Positions 305 to 321 (FTSLTMANKSSQASQNR) are enriched in polar residues. Residues 440-543 (HLRPQTRPSV…STAGGPAQKL (104 aa)) are interaction with AKT2. In terms of domain architecture, SH3 3 spans 445–506 (TRPSVYVAIY…PGNYVAPVTR (62 aa)). 3 disordered regions span residues 516 to 548 (VPMSTAGQTSRGVTMVSPSTAGGPAQKLQGNGV), 620 to 639 (SVGLSHHSLASPQPAPLMPG), and 684 to 741 (TVLP…ASPT). Positions 520–535 (TAGQTSRGVTMVSPST) are enriched in polar residues. Phosphoserine is present on serine 532. Residues 692–704 (SPDSASSACGNSS) show a composition bias toward polar residues. Residues 707–718 (KPDKDSKKEKKG) are compositionally biased toward basic and acidic residues. At serine 735 the chain carries Phosphoserine. An SH3 4 domain is found at 829–888 (VVCERHRVVVSYPPQSEAELELKEGDIVFVHKKREDGWFKGTLQRNGKTGLFPGSFVENI).

Belongs to the SH3RF family. As to quaternary structure, interacts with RAC1; in a GTP-dependent manner. Interacts with MAP3K10/MLK2 and MAP3K11/MLK3. Interacts with MAPK8IP; this interaction leads to the PJAC complex (POSH-JIP or SH3RF1/MAPK8IP apoptotic complex) with a 1:1 ratio. Interacts with SIAH1. Interacts with HERP1. Probably part of a signaling complex that may contain SH3RF1, MAPK8IP, DLK1, MAP2K4/MKK4, MAP2K7/MKK7, MAPK8/JNK1, MAPK9/JNK2, AKT1 and AKT2. Found in a complex with RAC2, MAP3K7/TAK1, MAP2K7/MKK7, MAPK8IP1/JIP1, MAPK8/JNK1 and MAPK9/JNK2. Found in a complex with RAC1, MAP3K11/MLK3, MAP2K7/MKK7, MAPK8IP1/JIP1 and MAPK8/JNK1. Interacts with SH3RF2. Post-translationally, phosphorylated at Ser-304 by AKT1 and AKT2. When phosphorylated, it has reduced ability to bind Rac. Autoubiquitinated. Ubiquitinated by SH3RF2, leading to proteasome-mediated degradation.

The protein resides in the cytoplasm. The protein localises to the perinuclear region. Its subcellular location is the cell projection. It is found in the lamellipodium. It localises to the golgi apparatus. The protein resides in the trans-Golgi network. The enzyme catalyses S-ubiquitinyl-[E2 ubiquitin-conjugating enzyme]-L-cysteine + [acceptor protein]-L-lysine = [E2 ubiquitin-conjugating enzyme]-L-cysteine + N(6)-ubiquitinyl-[acceptor protein]-L-lysine.. It participates in protein modification; protein ubiquitination. Its function is as follows. Has E3 ubiquitin-protein ligase activity. In the absence of an external substrate, it can catalyze self-ubiquitination. Stimulates ubiquitination of potassium channel KCNJ1, enhancing it's dynamin-dependent and clathrin-independent endocytosis. Acts as a scaffold protein that coordinates with MAPK8IP1/JIP1 in organizing different components of the JNK pathway, including RAC1 or RAC2, MAP3K11/MLK3 or MAP3K7/TAK1, MAP2K7/MKK7, MAPK8/JNK1 and/or MAPK9/JNK2 into a functional multiprotein complex to ensure the effective activation of the JNK signaling pathway. Regulates the differentiation of CD4(+) and CD8(+) T-cells and promotes T-helper 1 (Th1) cell differentiation. Regulates the activation of MAPK8/JNK1 and MAPK9/JNK2 in CD4(+) T-cells and the activation of MAPK8/JNK1 in CD8(+) T-cells. Plays a crucial role in the migration of neocortical neurons in the developing brain. Controls proper cortical neuronal migration and the formation of proximal cytoplasmic dilation in the leading process (PCDLP) in migratory neocortical neurons by regulating the proper localization of activated RAC1 and F-actin assembly. In terms of biological role, (Microbial infection) Plays an essential role in the targeting of HIV-1 Gag to the plasma membrane, this function is dependent on it's RING domain, and hence it's E3 ligase activity. The sequence is that of E3 ubiquitin-protein ligase SH3RF1 (SH3RF1) from Homo sapiens (Human).